Here is a 339-residue protein sequence, read N- to C-terminus: MKEKLKELQELAIKQIENSIKSNELEEIRVKFLGKKGELTTILRGMGGLSPEERPLVGKLVNEAKAKVEEKLESAIKKIKDKEKAEKLAGETIDISLPGKKQVIGKSHPLELTLKNMEDIFVSMGFTIEEGPEVEYDHYNFEALNIPKNHPARSEQDTLYINDNIVLRTQTSPVQVRTMENQKPPIKMISPGKVYRSDSVDATHSPIFYQMEGLVIDKGVTFADLKGTLELFAKKMFGDKVETKFRPHHFPFTEPSAEMDATCFVCGGEGCRVCKNSGWIELLGCGMVHPNVLRNCGIDPEVYSGFAFGFGVDRMVMLKYGIDDIRLLYESDMRFLNQF.

Residue glutamate 254 participates in Mg(2+) binding.

It belongs to the class-II aminoacyl-tRNA synthetase family. Phe-tRNA synthetase alpha subunit type 1 subfamily. In terms of assembly, tetramer of two alpha and two beta subunits. It depends on Mg(2+) as a cofactor.

Its subcellular location is the cytoplasm. It catalyses the reaction tRNA(Phe) + L-phenylalanine + ATP = L-phenylalanyl-tRNA(Phe) + AMP + diphosphate + H(+). This Clostridium botulinum (strain Alaska E43 / Type E3) protein is Phenylalanine--tRNA ligase alpha subunit.